Here is a 509-residue protein sequence, read N- to C-terminus: Maturase K (509 aa).

The protein belongs to the intron maturase 2 family. MatK subfamily.

It is found in the plastid. It localises to the chloroplast. Usually encoded in the trnK tRNA gene intron. Probably assists in splicing its own and other chloroplast group II introns. In Nicotiana bigelovii (Bigelov's tobacco), this protein is Maturase K.